A 151-amino-acid polypeptide reads, in one-letter code: Ubiquitin-conjugating enzyme E2 2 (151 aa).

Residues 4–150 (AARRRLMRDF…VRETVERSWE (147 aa)) enclose the UBC core domain. Residue cysteine 88 is the Glycyl thioester intermediate of the active site.

It belongs to the ubiquitin-conjugating enzyme family.

The protein localises to the cytoplasm. It is found in the nucleus. The enzyme catalyses S-ubiquitinyl-[E1 ubiquitin-activating enzyme]-L-cysteine + [E2 ubiquitin-conjugating enzyme]-L-cysteine = [E1 ubiquitin-activating enzyme]-L-cysteine + S-ubiquitinyl-[E2 ubiquitin-conjugating enzyme]-L-cysteine.. It functions in the pathway protein modification; protein ubiquitination. In terms of biological role, catalyzes the covalent attachment of ubiquitin to other proteins. Plays a role in transcription regulation by catalyzing the monoubiquitination of histone H2B to form H2BK123ub1. H2BK123ub1 gives a specific tag for epigenetic transcriptional activation and is also a prerequisite for H3K4me and H3K79me formation. Also involved in postreplication repair of UV-damaged DNA, in N-end rule-dependent protein degradation and in sporulation. The protein is Ubiquitin-conjugating enzyme E2 2 (UBC2) of Trichoderma harzianum (Hypocrea lixii).